The following is a 540-amino-acid chain: Phosphoenolpyruvate carboxykinase (ATP) (540 aa).

Residue Arg65 coordinates substrate. The residue at position 87 (Lys87) is an N6-acetyllysine. The substrate site is built by Tyr207 and Lys213. ATP-binding positions include Lys213, His232, and 248–256 (GLSGTGKTT). 2 residues coordinate Mn(2+): Lys213 and His232. Asp269 serves as a coordination point for Mn(2+). ATP is bound by residues Glu297, Arg333, 449–450 (RI), and Thr455. Arg333 contacts substrate. Lys523 bears the N6-acetyllysine mark.

The protein belongs to the phosphoenolpyruvate carboxykinase (ATP) family. As to quaternary structure, monomer. Mn(2+) serves as cofactor.

The protein localises to the cytoplasm. It catalyses the reaction oxaloacetate + ATP = phosphoenolpyruvate + ADP + CO2. It functions in the pathway carbohydrate biosynthesis; gluconeogenesis. Functionally, involved in the gluconeogenesis. Catalyzes the conversion of oxaloacetate (OAA) to phosphoenolpyruvate (PEP) through direct phosphoryl transfer between the nucleoside triphosphate and OAA. The chain is Phosphoenolpyruvate carboxykinase (ATP) from Escherichia coli O157:H7.